The chain runs to 391 residues: IKKEGLWIPKLEPERVVSILEWDRAAEPEHRLEAICASMIEAWGYDDLLNHIRRFYLWVLDQAPYKQLSAEGKAPYISEVALKSLYTGKPATSCELEVYNKIHQEQHDEFDDSQMKFVFQSDKEKLNVGEQQKSKDKESRQRDQEGENSNRQIIPDRDINAGTTGTFSVPKLKKISGKLSLPKIKGKGLLNLDHLLVYVPNQDDISNNIATQEQLEAWHEGVKNAYEVDDQQMEIICNGLMVWCIENGTSGDLQGEWTMMDGEKQVTFPLKPILDFAKPTLRQIMAHFSQAAESYIEFRNSTEKYMPRYGLQRNLTDYGLARYAFDFYRLTSKTPARAREAHMQMKAAAIRGKSNHMFGLDGNVGTDEENTERHTANDVNRNMHHIAGARF.

Residues 127–145 (NVGEQQKSKDKESRQRDQE) show a composition bias toward basic and acidic residues. Positions 127–165 (NVGEQQKSKDKESRQRDQEGENSNRQIIPDRDINAGTTG) are disordered.

The protein belongs to the potyviridae genome polyprotein family. Genome polyprotein of potyviruses undergoes post-translational proteolytic processing by the main proteinase NIa-pro resulting in the production of at least ten individual proteins. The P1 proteinase and the HC-pro cleave only their respective C-termini autocatalytically. 6K1 is essential for proper proteolytic separation of P3 from CI.

Its subcellular location is the virion. The catalysed reaction is RNA(n) + a ribonucleoside 5'-triphosphate = RNA(n+1) + diphosphate. Its function is as follows. An RNA-dependent RNA polymerase that plays an essential role in the virus replication. Functionally, involved in aphid transmission, cell-to-cell and systemis movement, encapsidation of the viral RNA and in the regulation of viral RNA amplification. This Clover yellow vein virus protein is Genome polyprotein.